Consider the following 306-residue polypeptide: Serine/threonine-protein phosphatase PP2A-1 catalytic subunit (306 aa).

Mn(2+) contacts are provided by D54, H56, D82, and N114. H115 acts as the Proton donor in catalysis. 2 residues coordinate Mn(2+): H164 and H238. Position 306 is a leucine methyl ester (L306).

It belongs to the PPP phosphatase family. PP-2A subfamily. PP2A consists of a common heterodimeric core enzyme, composed of a 36 kDa catalytic subunit (subunit C) and a 65 kDa constant regulatory subunit (subunit A), that associates with a variety of regulatory subunits such as subunits B (the R2/B/PR55/B55, R3/B''/PR72/PR130/PR59 and R5/B'/B56 families). Interacts with TAF12B. Interacts with SRK2E/OST1. Interacts with TAP46. Requires Mn(2+) as cofactor. Post-translationally, reversibly methyl esterified on Leu-306 by leucine carboxyl methyltransferase 1 (LCMT1) and pectin methylesterase 1 (PME1). Carboxyl methylation influences the affinity of the catalytic subunit for the different regulatory subunits, thereby modulating the PP2A holoenzyme's substrate specificity, enzyme activity and cellular localization. Phosphorylation of either threonine (by autophosphorylation-activated protein kinase) or tyrosine results in inactivation of the phosphatase. Auto-dephosphorylation has been suggested as a mechanism for reactivation.

It localises to the cytoplasm. It carries out the reaction O-phospho-L-seryl-[protein] + H2O = L-seryl-[protein] + phosphate. It catalyses the reaction O-phospho-L-threonyl-[protein] + H2O = L-threonyl-[protein] + phosphate. The chain is Serine/threonine-protein phosphatase PP2A-1 catalytic subunit from Arabidopsis thaliana (Mouse-ear cress).